We begin with the raw amino-acid sequence, 947 residues long: Bifunctional glutamine synthetase adenylyltransferase/adenylyl-removing enzyme (947 aa).

The interval methionine 1–glutamate 443 is adenylyl removase. Residues alanine 451–alanine 947 are adenylyl transferase.

It belongs to the GlnE family. Mg(2+) serves as cofactor.

The enzyme catalyses [glutamine synthetase]-O(4)-(5'-adenylyl)-L-tyrosine + phosphate = [glutamine synthetase]-L-tyrosine + ADP. It catalyses the reaction [glutamine synthetase]-L-tyrosine + ATP = [glutamine synthetase]-O(4)-(5'-adenylyl)-L-tyrosine + diphosphate. Involved in the regulation of glutamine synthetase GlnA, a key enzyme in the process to assimilate ammonia. When cellular nitrogen levels are high, the C-terminal adenylyl transferase (AT) inactivates GlnA by covalent transfer of an adenylyl group from ATP to specific tyrosine residue of GlnA, thus reducing its activity. Conversely, when nitrogen levels are low, the N-terminal adenylyl removase (AR) activates GlnA by removing the adenylyl group by phosphorolysis, increasing its activity. The regulatory region of GlnE binds the signal transduction protein PII (GlnB) which indicates the nitrogen status of the cell. This is Bifunctional glutamine synthetase adenylyltransferase/adenylyl-removing enzyme from Vibrio parahaemolyticus serotype O3:K6 (strain RIMD 2210633).